Here is a 322-residue protein sequence, read N- to C-terminus: Triosephosphate isomerase, chloroplastic (322 aa).

The transit peptide at 1-67 (MAVVSTSLAS…RRCPRGVVAM (67 aa)) directs the protein to the chloroplast. The substrate site is built by Asn-78 and Lys-80. His-162 (electrophile) is an active-site residue. The active-site Proton acceptor is the Glu-232.

It belongs to the triosephosphate isomerase family. Homodimer.

It localises to the plastid. Its subcellular location is the chloroplast. The enzyme catalyses D-glyceraldehyde 3-phosphate = dihydroxyacetone phosphate. The protein operates within carbohydrate biosynthesis; Calvin cycle. The protein is Triosephosphate isomerase, chloroplastic (TPIP1) of Spinacia oleracea (Spinach).